The following is a 465-amino-acid chain: UDP-N-acetylmuramoylalanine--D-glutamate ligase (465 aa).

127-133 is a binding site for ATP; that stretch reads GSNGKST.

The protein belongs to the MurCDEF family.

Its subcellular location is the cytoplasm. The enzyme catalyses UDP-N-acetyl-alpha-D-muramoyl-L-alanine + D-glutamate + ATP = UDP-N-acetyl-alpha-D-muramoyl-L-alanyl-D-glutamate + ADP + phosphate + H(+). Its pathway is cell wall biogenesis; peptidoglycan biosynthesis. Its function is as follows. Cell wall formation. Catalyzes the addition of glutamate to the nucleotide precursor UDP-N-acetylmuramoyl-L-alanine (UMA). This Cereibacter sphaeroides (strain ATCC 17029 / ATH 2.4.9) (Rhodobacter sphaeroides) protein is UDP-N-acetylmuramoylalanine--D-glutamate ligase.